The primary structure comprises 423 residues: MDKIIVEGGQTRLQGQVVIEGAKNAVLPLLAATILPSQGKTLLTNVPILSDVFTMNNVVRGLDIQVDFNCDKKEILVDASGDILDVAPYEFVSQMRASIVVLGPILARNGHAKVSMPGGCTIGSRPIDLHLKGLEAMGATITQNGGDITAQAEKLKGANIYMDFPSVGATQNLMMAATLASGTTTIENAAREPEIVDLAQLLNKMGAKVKGAGTETLTIIGVDALHGTEHDVVQDRIEAGTFMVAAAMTSGNVLVKDAIWEHNRPLISKLMEMGVEVSEEEDGIRVKADTKKLKPVTVKTLPHPGFPTDMQAQFTALMAVVNGESTMIETVFENRFQHLEEMRRMGLQTEILRDTAMIHGGRALQGAPVMSTDLRASAALILAGMVAQGQTVVGQLTHLDRGYYQFHEKLAALGANIKRVSEA.

23–24 is a binding site for phosphoenolpyruvate; the sequence is KN. Residue Arg-96 coordinates UDP-N-acetyl-alpha-D-glucosamine. Cys-120 functions as the Proton donor in the catalytic mechanism. The residue at position 120 (Cys-120) is a 2-(S-cysteinyl)pyruvic acid O-phosphothioketal. Residues 125-129, Asp-309, and Val-331 contribute to the UDP-N-acetyl-alpha-D-glucosamine site; that span reads RPIDL.

It belongs to the EPSP synthase family. MurA subfamily.

Its subcellular location is the cytoplasm. It carries out the reaction phosphoenolpyruvate + UDP-N-acetyl-alpha-D-glucosamine = UDP-N-acetyl-3-O-(1-carboxyvinyl)-alpha-D-glucosamine + phosphate. Its pathway is cell wall biogenesis; peptidoglycan biosynthesis. Functionally, cell wall formation. Adds enolpyruvyl to UDP-N-acetylglucosamine. The polypeptide is UDP-N-acetylglucosamine 1-carboxyvinyltransferase 2 (Streptococcus agalactiae serotype III (strain NEM316)).